Here is a 394-residue protein sequence, read N- to C-terminus: Elongation factor Tu 2 (394 aa).

Residues 10-204 (KPHVNVGTIG…ALDSYIPQPE (195 aa)) enclose the tr-type G domain. Residues 19–26 (GHVDHGKT) form a G1 region. 19-26 (GHVDHGKT) lines the GTP pocket. Thr26 contributes to the Mg(2+) binding site. The tract at residues 60 to 64 (GITIN) is G2. A G3 region spans residues 81–84 (DCPG). Residues 81-85 (DCPGH) and 136-139 (NKCD) contribute to the GTP site. The segment at 136-139 (NKCD) is G4. The interval 174-176 (SAL) is G5.

Belongs to the TRAFAC class translation factor GTPase superfamily. Classic translation factor GTPase family. EF-Tu/EF-1A subfamily. As to quaternary structure, monomer.

The protein resides in the cytoplasm. The enzyme catalyses GTP + H2O = GDP + phosphate + H(+). Its function is as follows. GTP hydrolase that promotes the GTP-dependent binding of aminoacyl-tRNA to the A-site of ribosomes during protein biosynthesis. In Yersinia pestis bv. Antiqua (strain Antiqua), this protein is Elongation factor Tu 2.